The primary structure comprises 196 residues: uncharacterized protein (196 aa).

In terms of domain architecture, HTH cro/C1-type spans 12–66; that stretch reads LRAAREAQKMSQRELSARSGLTQSHISQIERGTMEPGLGSLVDVARALDLEIVLA. The segment at residues 23–42 is a DNA-binding region (H-T-H motif); sequence QRELSARSGLTQSHISQIER. The disordered stretch occupies residues 174–196; sequence VHRDRDDAVPRSAYALDEEDDNA.

This is an uncharacterized protein from Sinorhizobium fredii (strain NBRC 101917 / NGR234).